Reading from the N-terminus, the 145-residue chain is D-aminoacyl-tRNA deacylase (145 aa).

The Gly-cisPro motif, important for rejection of L-amino acids motif lies at 137-138; sequence GP.

It belongs to the DTD family. As to quaternary structure, homodimer.

The protein localises to the cytoplasm. It catalyses the reaction glycyl-tRNA(Ala) + H2O = tRNA(Ala) + glycine + H(+). It carries out the reaction a D-aminoacyl-tRNA + H2O = a tRNA + a D-alpha-amino acid + H(+). In terms of biological role, an aminoacyl-tRNA editing enzyme that deacylates mischarged D-aminoacyl-tRNAs. Also deacylates mischarged glycyl-tRNA(Ala), protecting cells against glycine mischarging by AlaRS. Acts via tRNA-based rather than protein-based catalysis; rejects L-amino acids rather than detecting D-amino acids in the active site. By recycling D-aminoacyl-tRNA to D-amino acids and free tRNA molecules, this enzyme counteracts the toxicity associated with the formation of D-aminoacyl-tRNA entities in vivo and helps enforce protein L-homochirality. This Pseudomonas putida (strain W619) protein is D-aminoacyl-tRNA deacylase.